Consider the following 189-residue polypeptide: HGPRTase-like protein (189 aa).

The protein belongs to the purine/pyrimidine phosphoribosyltransferase family. Archaeal HPRT subfamily.

In terms of biological role, may catalyze a purine salvage reaction, the substrate is unknown. This is HGPRTase-like protein from Halorubrum lacusprofundi (strain ATCC 49239 / DSM 5036 / JCM 8891 / ACAM 34).